The following is a 238-amino-acid chain: Ubiquinone biosynthesis O-methyltransferase (238 aa).

4 residues coordinate S-adenosyl-L-methionine: arginine 39, glycine 58, aspartate 79, and methionine 123.

It belongs to the methyltransferase superfamily. UbiG/COQ3 family.

It carries out the reaction a 3-demethylubiquinol + S-adenosyl-L-methionine = a ubiquinol + S-adenosyl-L-homocysteine + H(+). The enzyme catalyses a 3-(all-trans-polyprenyl)benzene-1,2-diol + S-adenosyl-L-methionine = a 2-methoxy-6-(all-trans-polyprenyl)phenol + S-adenosyl-L-homocysteine + H(+). Its pathway is cofactor biosynthesis; ubiquinone biosynthesis. Functionally, O-methyltransferase that catalyzes the 2 O-methylation steps in the ubiquinone biosynthetic pathway. The polypeptide is Ubiquinone biosynthesis O-methyltransferase (Hahella chejuensis (strain KCTC 2396)).